The primary structure comprises 182 residues: Ribosome maturation factor RimM (182 aa).

The region spanning 103 to 182 is the PRC barrel domain; that stretch reads EDEFYWRELF…RIEVDWDPGF (80 aa).

It belongs to the RimM family. Binds ribosomal protein uS19.

The protein resides in the cytoplasm. In terms of biological role, an accessory protein needed during the final step in the assembly of 30S ribosomal subunit, possibly for assembly of the head region. Essential for efficient processing of 16S rRNA. May be needed both before and after RbfA during the maturation of 16S rRNA. It has affinity for free ribosomal 30S subunits but not for 70S ribosomes. The sequence is that of Ribosome maturation factor RimM from Vibrio campbellii (strain ATCC BAA-1116).